The following is a 397-amino-acid chain: Tyrosine aminotransferase (397 aa).

4 residues coordinate substrate: G34, Y66, W131, and N184. N6-(pyridoxal phosphate)lysine is present on K247. Substrate is bound at residue R375.

It belongs to the class-I pyridoxal-phosphate-dependent aminotransferase family. In terms of assembly, homodimer. It depends on pyridoxal 5'-phosphate as a cofactor.

The enzyme catalyses L-tyrosine + 2-oxoglutarate = 3-(4-hydroxyphenyl)pyruvate + L-glutamate. It carries out the reaction 4-methylsulfanyl-2-oxobutanoate + L-tyrosine = 3-(4-hydroxyphenyl)pyruvate + L-methionine. The catalysed reaction is an aromatic L-alpha-amino acid + 2-oxoglutarate = an aromatic oxo-acid + L-glutamate. It catalyses the reaction L-aspartate + 2-oxoglutarate = oxaloacetate + L-glutamate. It participates in amino-acid biosynthesis; L-methionine biosynthesis via salvage pathway; L-methionine from S-methyl-5-thio-alpha-D-ribose 1-phosphate: step 6/6. With respect to regulation, inhibited by malate and nitrotyrosine by approximately 20% at the higher concentration. At 100 uM, canaline and carboxymethoxylamine inhibit aminotransferase activity by 35 and 70%, respectively. Addition of 1.0 mM carboxymethoxylamine lead to a complete inhibition of the aminotransferase activity. In terms of biological role, catalyzes the formation of methionine from 2-keto-4-methylthiobutyrate (KMTB) primarily using aromatic amino acids (tyrosine, phenylalanine and tryptophan) or glutamate as the amino donors. Histidine, leucine, asparagine, or arginine are also functional amino donors but to a lesser extent. Can also use alpha-ketoglutarate, oxaloacetate and pyruvate as the amino acceptors. The polypeptide is Tyrosine aminotransferase (tyrB) (Klebsiella pneumoniae).